Reading from the N-terminus, the 89-residue chain is Conotoxin Lt6.4 (89 aa).

Positions 1-22 are cleaved as a signal peptide; it reads MKLTCVPIVAMLFLMACQLITA. The propeptide occupies 23 to 50; sequence DYSREKHGYSAEKSSDKIQDSFYSKLTK. 3 disulfides stabilise this stretch: cysteine 52/cysteine 67, cysteine 59/cysteine 71, and cysteine 66/cysteine 80.

The protein belongs to the conotoxin O1 superfamily. Expressed by the venom duct.

It localises to the secreted. The sequence is that of Conotoxin Lt6.4 from Conus litteratus (Lettered cone).